The primary structure comprises 124 residues: Urease subunit beta (124 aa).

It belongs to the urease beta subunit family. As to quaternary structure, heterotrimer of UreA (gamma), UreB (beta) and UreC (alpha) subunits. Three heterotrimers associate to form the active enzyme.

The protein resides in the cytoplasm. It carries out the reaction urea + 2 H2O + H(+) = hydrogencarbonate + 2 NH4(+). It functions in the pathway nitrogen metabolism; urea degradation; CO(2) and NH(3) from urea (urease route): step 1/1. In Bacillus velezensis (strain DSM 23117 / BGSC 10A6 / LMG 26770 / FZB42) (Bacillus amyloliquefaciens subsp. plantarum), this protein is Urease subunit beta.